A 163-amino-acid polypeptide reads, in one-letter code: Globin CTT-Z (163 aa).

Residues 1 to 16 (MKFFAVLALCIVGAIA) form the signal peptide. The region spanning 18–162 (PLTSDEAALV…VYTAVFQIVT (145 aa)) is the Globin domain. Residues H76 and H111 each coordinate heme b.

Belongs to the globin family.

The polypeptide is Globin CTT-Z (CTT-Z) (Chironomus thummi thummi (Midge)).